Reading from the N-terminus, the 157-residue chain is 2-C-methyl-D-erythritol 2,4-cyclodiphosphate synthase (157 aa).

Asp-8 and His-10 together coordinate a divalent metal cation. 4-CDP-2-C-methyl-D-erythritol 2-phosphate contacts are provided by residues 8–10 and 34–35; these read DVH and HS. Residue His-42 participates in a divalent metal cation binding. Residues 56–58, 61–65, 132–135, and Phe-139 contribute to the 4-CDP-2-C-methyl-D-erythritol 2-phosphate site; these read DIG, FPDTD, and TTEE.

The protein belongs to the IspF family. In terms of assembly, homotrimer. Requires a divalent metal cation as cofactor.

The enzyme catalyses 4-CDP-2-C-methyl-D-erythritol 2-phosphate = 2-C-methyl-D-erythritol 2,4-cyclic diphosphate + CMP. It functions in the pathway isoprenoid biosynthesis; isopentenyl diphosphate biosynthesis via DXP pathway; isopentenyl diphosphate from 1-deoxy-D-xylulose 5-phosphate: step 4/6. Involved in the biosynthesis of isopentenyl diphosphate (IPP) and dimethylallyl diphosphate (DMAPP), two major building blocks of isoprenoid compounds. Catalyzes the conversion of 4-diphosphocytidyl-2-C-methyl-D-erythritol 2-phosphate (CDP-ME2P) to 2-C-methyl-D-erythritol 2,4-cyclodiphosphate (ME-CPP) with a corresponding release of cytidine 5-monophosphate (CMP). The polypeptide is 2-C-methyl-D-erythritol 2,4-cyclodiphosphate synthase (Clostridium botulinum (strain Eklund 17B / Type B)).